A 166-amino-acid polypeptide reads, in one-letter code: Endoribonuclease YbeY (166 aa).

Zn(2+) is bound by residues His132, His136, and His142.

This sequence belongs to the endoribonuclease YbeY family. Zn(2+) is required as a cofactor.

It is found in the cytoplasm. In terms of biological role, single strand-specific metallo-endoribonuclease involved in late-stage 70S ribosome quality control and in maturation of the 3' terminus of the 16S rRNA. The protein is Endoribonuclease YbeY of Clostridium botulinum (strain Langeland / NCTC 10281 / Type F).